Reading from the N-terminus, the 1105-residue chain is MSSNANSQHSTLAKFAFNIYGSLNHATPSYEGSASPSSSYSSSRSKTNEPYNYRFNKLVYNCEREVTTLSQLNYPLSLSNTFQSDQNLSHHVIIGGRNYLKLLALNEDQSRIVQDINVLDQSSIYTHNSRVPSTNKLNNINTVKAQSDTIGCGLSNGLITVYKVGSNGKCRLIHKFSDHKRCINSLDYVGIRNLYDAPTQMISGSQDGSIKLWDMRSSSPRPMLTISSGSHSDPIRSCQYSPHSQGRNKLVVLSVHDSGALCKFDLRLSNGHGPERKWNIHTGPALSLHIHPEKEYVVTGGRDQKICVFNYGDSQISNRITPDEMINTYGPVMKVRWCLYPDASTSQFGEPLDTFQQSNDFNSSSLYSYDLACSYLNDDSTVAIYNLNRKFIPKEVITTSSNKPIQNFIWANNPGSSRKIWTITKSNVFSSYDLDMHDSLLESEISKPLDELANVTVDWNNGFGDLCLANQEKYEFEITEVESQASDNDMGDIDTEYSSRYERSNSNSVIDESSLIGSSSAEKPPLFRSSTHYSMHMAKSPSPVPRRGSTSFAAHSESQPNLSNMQGLSMSRPKLTRNLSQATEDSSISIGSAPQSNIHLKSKRSFQVSYASPYLVPVSLPLSLNDENVFEILSNNYLISIPDGFTLVDVCLLNASVAASVQRFRECQIWRVLAVSLEEDYVQIDNTTFLSDPELEHNETNQDEKIDDQKDAKSISSDLGNFVGSYNSNSTSTTNYGGLGSLSAKDTTKANNSNNLMDMINRSRVNSMNHLQSISPSGSHTFIRNAIHENKSNENAIVDDDETDAAVHGTEGRIGTSHVSEDLDNENLNILNNAVLNSSPNSAMTTPHPQSNSPNYSNFFSLPKLSSTFMSPIYDEFAEKQEQPRSLKAESLLNNDVSDRTTTKSELTKAIKEEVDNSSGAPLKKAWKSSSLLEKALAHASNEGDIILCSTLSLLFYDSFKQVIPQSSCLDWLGLYIEILQRKRLFVNAIHVVNNAPDDVRSKLKNLTSGDVDLRFFCCWCQKLLVNEKSKEKLKNDVNADFGYWYCDECSQKQSNCIYCNEPCKGLTVVVSLKCGHRGHFGCLREWFIEDENNECPGGCDYSVV.

5 WD repeats span residues 135–172 (NKLN…KCRL), 178–223 (DHKR…PRPM), 230–274 (SHSD…GHGP), 280–319 (IHTG…ISNR), and 377–420 (NDDS…SRKI). 4 disordered regions span residues 481–523 (VESQ…SAEK), 535–590 (MHMA…SISI), 692–711 (DPEL…DQKD), and 734–754 (TNYG…NNSN). 3 stretches are compositionally biased toward polar residues: residues 509-521 (VIDE…SSSA), 548-569 (GSTS…QGLS), and 577-590 (RNLS…SISI). The WD 6 repeat unit spans residues 560–601 (PNLSNMQGLSMSRPKLTRNLSQATEDSSISIGSAPQSNIHLK). Basic and acidic residues predominate over residues 694 to 711 (ELEHNETNQDEKIDDQKD). The WD 7 repeat unit spans residues 917–959 (NSSGAPLKKAWKSSSLLEKALAHASNEGDIILCSTLSLLFYDS). An RING-type; degenerate zinc finger spans residues 1057-1100 (CIYCNEPCKGLTVVVSLKCGHRGHFGCLREWFIEDENNECPGGC).

The protein belongs to the WD repeat RTC1 family.

The protein resides in the vacuole. Functionally, may be involved in a process influencing telomere capping. This Scheffersomyces stipitis (strain ATCC 58785 / CBS 6054 / NBRC 10063 / NRRL Y-11545) (Yeast) protein is Restriction of telomere capping protein 1 (RTC1).